The chain runs to 464 residues: Cytoplasmic tRNA 2-thiolation protein 2 (464 aa).

This sequence belongs to the CTU2/NCS2 family.

The protein resides in the cytoplasm. It participates in tRNA modification; 5-methoxycarbonylmethyl-2-thiouridine-tRNA biosynthesis. Plays a central role in 2-thiolation of mcm(5)S(2)U at tRNA wobble positions of tRNA(Lys), tRNA(Glu) and tRNA(Gln). May act by forming a heterodimer with NCS6/CTU1 that ligates sulfur from thiocarboxylated URM1 onto the uridine of tRNAs at wobble position. The chain is Cytoplasmic tRNA 2-thiolation protein 2 from Oryza sativa subsp. indica (Rice).